Reading from the N-terminus, the 429-residue chain is Glutamate-1-semialdehyde 2,1-aminomutase 2 (429 aa).

An N6-(pyridoxal phosphate)lysine modification is found at lysine 268.

Belongs to the class-III pyridoxal-phosphate-dependent aminotransferase family. HemL subfamily. In terms of assembly, homodimer. The cofactor is pyridoxal 5'-phosphate.

Its subcellular location is the cytoplasm. It carries out the reaction (S)-4-amino-5-oxopentanoate = 5-aminolevulinate. The protein operates within porphyrin-containing compound metabolism; protoporphyrin-IX biosynthesis; 5-aminolevulinate from L-glutamyl-tRNA(Glu): step 2/2. This chain is Glutamate-1-semialdehyde 2,1-aminomutase 2, found in Staphylococcus aureus (strain USA300).